A 217-amino-acid polypeptide reads, in one-letter code: Urease accessory protein UreE (217 aa).

Residues 148-217 (AYGEAAAHGH…DHDHGSGHHH (70 aa)) are disordered. Residues 160–171 (AGHDHAHDHDHG) are compositionally biased toward basic and acidic residues. The span at 193-202 (AAAPAPHVHG) shows a compositional bias: low complexity. Basic and acidic residues predominate over residues 206-217 (GHDHDHGSGHHH).

It belongs to the UreE family.

Its subcellular location is the cytoplasm. Its function is as follows. Involved in urease metallocenter assembly. Binds nickel. Probably functions as a nickel donor during metallocenter assembly. The chain is Urease accessory protein UreE from Methylibium petroleiphilum (strain ATCC BAA-1232 / LMG 22953 / PM1).